Here is a 486-residue protein sequence, read N- to C-terminus: Shugoshin-1 (486 aa).

A coiled-coil region spans residues 71-154; that stretch reads IEVSRVELQK…QNRAKILEKK (84 aa). Disordered stretches follow at residues 137-163, 187-209, 222-251, 323-346, 382-403, and 418-467; these read MSKT…CAPT, YTSC…RKSE, HSCR…ARLN, AGSS…PRKS, PIQH…DPGP, and TVAP…SRRA. The segment covering 331–346 has biased composition (basic and acidic residues); it reads EAHKFDIEDPEPPRKS. Residues 387–396 show a composition bias toward basic residues; that stretch reads QKRKLSRRKS. Residues 423–433 show a composition bias toward polar residues; sequence APSSSNALIEQ.

It belongs to the shugoshin family. Highly expressed in roots. Expressed in panicles. Expressed at low levels in leaves.

It localises to the nucleus. It is found in the nucleolus. Its subcellular location is the chromosome. The protein localises to the centromere. Its function is as follows. Plays a central role in chromosome cohesion during meiosis I by preventing premature dissociation of cohesin complex from centromeres after prophase, when most of cohesin complex dissociates from chromosomes arms. Required for the timely assembly and maintenance of synaptonemal complex (SC) during early prophase I. Required for maintenance of centromeric cohesion before prophase II and correct segregation of chromatids during meiosis II. Has apparently no function in mitosis. The sequence is that of Shugoshin-1 from Oryza sativa subsp. japonica (Rice).